A 129-amino-acid polypeptide reads, in one-letter code: Glycine cleavage system H protein (129 aa).

One can recognise a Lipoyl-binding domain in the interval Thr24 to Lys106. Position 65 is an N6-lipoyllysine (Lys65).

Belongs to the GcvH family. In terms of assembly, the glycine cleavage system is composed of four proteins: P, T, L and H. (R)-lipoate serves as cofactor.

Functionally, the glycine cleavage system catalyzes the degradation of glycine. The H protein shuttles the methylamine group of glycine from the P protein to the T protein. The chain is Glycine cleavage system H protein from Pseudoalteromonas translucida (strain TAC 125).